A 628-amino-acid chain; its full sequence is Vacuolar-sorting receptor 3 (628 aa).

The first 24 residues, 1-24 (MKQLLCYLPWLLLLTLLVSPLNDA), serve as a signal peptide directing secretion. At 25 to 569 (RFVVEKNSLS…SKTGAQVRSA (545 aa)) the chain is on the lumenal side. Residues 56 to 168 (QYGGSMAGTV…GFGEKLKKAI (113 aa)) enclose the PA domain. N-linked (GlcNAc...) asparagine glycosylation is found at Asn-148, Asn-294, and Asn-434. EGF-like domains lie at 416–466 (ESNE…SHCE) and 469–516 (GPGR…KKCE). 7 disulfide bridges follow: Cys-420–Cys-438, Cys-427–Cys-447, Cys-449–Cys-465, Cys-473–Cys-493, Cys-480–Cys-501, Cys-503–Cys-515, and Cys-545–Cys-558. The 43-residue stretch at 517 to 559 (DINECKEKKACQCPECSCKNTWGSYECSCSGDLLYIRDHDTCI) folds into the EGF-like 3; calcium-binding domain. Residues 570–590 (WAAVWLIMLSLGLAAAGAYLV) form a helical membrane-spanning segment. The Cytoplasmic portion of the chain corresponds to 591-628 (YKYRLRQYMDSEIRAIMAQYMPLDSQPEIPNHVNDERA). The short motif at 610–613 (YMPL) is the Tyrosine-based internalization motif element.

The protein belongs to the VSR (BP-80) family. Expressed in seeds, seedlings, roots, leaves, flowers and siliques.

Its subcellular location is the membrane. The protein localises to the golgi apparatus membrane. It localises to the cytoplasmic vesicle. The protein resides in the clathrin-coated vesicle membrane. It is found in the prevacuolar compartment membrane. In terms of biological role, vacuolar-sorting receptor (VSR) involved in clathrin-coated vesicles sorting from Golgi apparatus to vacuoles. This is Vacuolar-sorting receptor 3 (VSR3) from Arabidopsis thaliana (Mouse-ear cress).